Here is a 280-residue protein sequence, read N- to C-terminus: Shikimate dehydrogenase (NADP(+)) (280 aa).

Residues 15 to 17 and T62 contribute to the shikimate site; that span reads SLS. The active-site Proton acceptor is K66. N88 and D104 together coordinate shikimate. NADP(+) contacts are provided by residues 128–132, 151–156, and I222; these read GAGGA and NRTEGR. Y224 contributes to the shikimate binding site. G245 provides a ligand contact to NADP(+).

It belongs to the shikimate dehydrogenase family. In terms of assembly, homodimer.

It carries out the reaction shikimate + NADP(+) = 3-dehydroshikimate + NADPH + H(+). It participates in metabolic intermediate biosynthesis; chorismate biosynthesis; chorismate from D-erythrose 4-phosphate and phosphoenolpyruvate: step 4/7. In terms of biological role, involved in the biosynthesis of the chorismate, which leads to the biosynthesis of aromatic amino acids. Catalyzes the reversible NADPH linked reduction of 3-dehydroshikimate (DHSA) to yield shikimate (SA). This Methanosarcina barkeri (strain Fusaro / DSM 804) protein is Shikimate dehydrogenase (NADP(+)).